The following is a 232-amino-acid chain: Large ribosomal subunit protein uL1 (232 aa).

It belongs to the universal ribosomal protein uL1 family. In terms of assembly, part of the 50S ribosomal subunit.

Binds directly to 23S rRNA. The L1 stalk is quite mobile in the ribosome, and is involved in E site tRNA release. Functionally, protein L1 is also a translational repressor protein, it controls the translation of the L11 operon by binding to its mRNA. The sequence is that of Large ribosomal subunit protein uL1 from Bacteroides thetaiotaomicron (strain ATCC 29148 / DSM 2079 / JCM 5827 / CCUG 10774 / NCTC 10582 / VPI-5482 / E50).